We begin with the raw amino-acid sequence, 179 residues long: ADP-ribosylation factor-like protein 5A (179 aa).

The N-myristoyl glycine moiety is linked to residue glycine 2. Residues 23 to 30 (GLDNAGKT), 66 to 70 (DIGGQ), 125 to 128 (NKQD), and alanine 159 contribute to the GTP site.

This sequence belongs to the small GTPase superfamily. Arf family.

Functionally, lacks ADP-ribosylation enhancing activity. The protein is ADP-ribosylation factor-like protein 5A (Arl5a) of Mus musculus (Mouse).